Here is a 332-residue protein sequence, read N- to C-terminus: L-lactate dehydrogenase A chain (332 aa).

NAD(+)-binding positions include 29 to 57 (GAVGMACAISILMKDLADELALVDVIEDK) and R99. Substrate-binding residues include R106, N138, and R169. N138 serves as a coordination point for NAD(+). The active-site Proton acceptor is the H193. T248 is a substrate binding site.

This sequence belongs to the LDH/MDH superfamily. LDH family. In terms of assembly, homotetramer.

The protein resides in the cytoplasm. The catalysed reaction is (S)-lactate + NAD(+) = pyruvate + NADH + H(+). The protein operates within fermentation; pyruvate fermentation to lactate; (S)-lactate from pyruvate: step 1/1. In terms of biological role, interconverts simultaneously and stereospecifically pyruvate and lactate with concomitant interconversion of NADH and NAD(+). The chain is L-lactate dehydrogenase A chain (LDHA) from Sceloporus woodi (Florida scrub lizard).